Consider the following 47-residue polypeptide: Accessory gland peptide Acp33A (47 aa).

Positions 1–21 are cleaved as a signal peptide; that stretch reads MLPSKRVPFLFTIILFLAGLG.

Main cells of accessory gland and seminal fluid.

It is found in the secreted. Functionally, responsible for physiological and behavioral changes in mated female flies. This is Accessory gland peptide Acp33A (Acp33A) from Drosophila melanogaster (Fruit fly).